A 238-amino-acid polypeptide reads, in one-letter code: Single-stranded DNA-binding protein WHY2, mitochondrial (238 aa).

A mitochondrion-targeting transit peptide spans 1-29; that stretch reads MMKQARSLLSRSLCDQSKSLFEASTLRGF. The tract at residues 62-67 is required for ssDNA binding; the sequence is KGKAAL.

Belongs to the Whirly family. As to quaternary structure, homotetramer.

It is found in the mitochondrion. Single-stranded DNA-binding protein that associates with mitochondrial DNA and may play a role in the regulation of the gene expression machinery. Also seems to be required to prevent break-induced DNA rearrangements in the mitochondrial genome. Can bind to melt double-stranded DNA in vivo. This chain is Single-stranded DNA-binding protein WHY2, mitochondrial (WHY2), found in Arabidopsis thaliana (Mouse-ear cress).